The following is a 220-amino-acid chain: MNVKIESSWQQRLQEEFDKPYFEKLVNFVKNEYGKAHILPPGHQIFHVFNSCPFQNVKVVILGQDPYPNPGQYYGICFSVPDGVAIPGSLSNIFKEIHQDLGKPIPNSGNLDRWVKQGVFPMNSVLTVRAHETGSHRNIGWETFTDAVIKKLSEERENLVFMLWGSYAKEKASLIDTDKHLILTAVHPSPRSADYGFFGCKHFSKANTFLRSRGIEEIDW.

Aspartate 65 (proton acceptor) is an active-site residue.

This sequence belongs to the uracil-DNA glycosylase (UDG) superfamily. UNG family.

Its subcellular location is the cytoplasm. The catalysed reaction is Hydrolyzes single-stranded DNA or mismatched double-stranded DNA and polynucleotides, releasing free uracil.. Functionally, excises uracil residues from the DNA which can arise as a result of misincorporation of dUMP residues by DNA polymerase or due to deamination of cytosine. In Bacteroides fragilis (strain YCH46), this protein is Uracil-DNA glycosylase 1.